The following is a 187-amino-acid chain: Large ribosomal subunit protein uL5 (187 aa).

Belongs to the universal ribosomal protein uL5 family. As to quaternary structure, part of the 50S ribosomal subunit; part of the 5S rRNA/L5/L18/L25 subcomplex. Contacts the 5S rRNA and the P site tRNA. Forms a bridge to the 30S subunit in the 70S ribosome.

Its function is as follows. This is one of the proteins that bind and probably mediate the attachment of the 5S RNA into the large ribosomal subunit, where it forms part of the central protuberance. In the 70S ribosome it contacts protein S13 of the 30S subunit (bridge B1b), connecting the 2 subunits; this bridge is implicated in subunit movement. Contacts the P site tRNA; the 5S rRNA and some of its associated proteins might help stabilize positioning of ribosome-bound tRNAs. The protein is Large ribosomal subunit protein uL5 of Mycobacteroides abscessus (strain ATCC 19977 / DSM 44196 / CCUG 20993 / CIP 104536 / JCM 13569 / NCTC 13031 / TMC 1543 / L948) (Mycobacterium abscessus).